Consider the following 32-residue polypeptide: CSYPSKLCNNHRANVNQQRMQQKLIRQQMVER.

Its subcellular location is the secreted. In Globisporangium hypogynum (Pythium hypogynum), this protein is Secreted protein F2.